The chain runs to 346 residues: Nicotinate-nucleotide--dimethylbenzimidazole phosphoribosyltransferase (346 aa).

Catalysis depends on Glu312, which acts as the Proton acceptor.

Belongs to the CobT family.

The enzyme catalyses 5,6-dimethylbenzimidazole + nicotinate beta-D-ribonucleotide = alpha-ribazole 5'-phosphate + nicotinate + H(+). The protein operates within nucleoside biosynthesis; alpha-ribazole biosynthesis; alpha-ribazole from 5,6-dimethylbenzimidazole: step 1/2. Functionally, catalyzes the synthesis of alpha-ribazole-5'-phosphate from nicotinate mononucleotide (NAMN) and 5,6-dimethylbenzimidazole (DMB). The sequence is that of Nicotinate-nucleotide--dimethylbenzimidazole phosphoribosyltransferase from Cupriavidus necator (strain ATCC 17699 / DSM 428 / KCTC 22496 / NCIMB 10442 / H16 / Stanier 337) (Ralstonia eutropha).